The following is a 246-amino-acid chain: MSGDFPTAARAAEILERVRQMRPRVHCLMNTVVQKFTADGITVIGGIPSMTTSLEEIESFVTKADALTVNLGTLDAERRRVIRLAIEIANASGKPWIVDPVHVDYSPSRLDFARELIAQSPTIVRGNRAEMSLIGDVPDVVRIETGPVDHLRDRTRNVSIVNGHPWMAKVTGTGCLSGGVIAAFMAVEKDALTAAASALAVTGVSAELAAQRAKGPGTFEPAFLDALSEISGEDIINHARIEHEQG.

Position 50 (methionine 50) interacts with substrate. ATP is bound by residues arginine 125 and threonine 145. A substrate-binding site is contributed by glycine 172.

This sequence belongs to the Thz kinase family. It depends on Mg(2+) as a cofactor.

It carries out the reaction 5-(2-hydroxyethyl)-4-methylthiazole + ATP = 4-methyl-5-(2-phosphooxyethyl)-thiazole + ADP + H(+). It participates in cofactor biosynthesis; thiamine diphosphate biosynthesis; 4-methyl-5-(2-phosphoethyl)-thiazole from 5-(2-hydroxyethyl)-4-methylthiazole: step 1/1. Its function is as follows. Catalyzes the phosphorylation of the hydroxyl group of 4-methyl-5-beta-hydroxyethylthiazole (THZ). In Agrobacterium fabrum (strain C58 / ATCC 33970) (Agrobacterium tumefaciens (strain C58)), this protein is Probable hydroxyethylthiazole kinase (thiM).